The sequence spans 239 residues: 1-(5-phosphoribosyl)-5-[(5-phosphoribosylamino)methylideneamino] imidazole-4-carboxamide isomerase (239 aa).

D8 serves as the catalytic Proton acceptor. The Proton donor role is filled by D129.

Belongs to the HisA/HisF family.

Its subcellular location is the cytoplasm. It catalyses the reaction 1-(5-phospho-beta-D-ribosyl)-5-[(5-phospho-beta-D-ribosylamino)methylideneamino]imidazole-4-carboxamide = 5-[(5-phospho-1-deoxy-D-ribulos-1-ylimino)methylamino]-1-(5-phospho-beta-D-ribosyl)imidazole-4-carboxamide. It functions in the pathway amino-acid biosynthesis; L-histidine biosynthesis; L-histidine from 5-phospho-alpha-D-ribose 1-diphosphate: step 4/9. The sequence is that of 1-(5-phosphoribosyl)-5-[(5-phosphoribosylamino)methylideneamino] imidazole-4-carboxamide isomerase from Bacillus cereus (strain B4264).